Consider the following 420-residue polypeptide: Trichothecene biosynthesis transcription regulator TRI10 (420 aa).

This sequence belongs to the TRI10 transcription regulator family.

Its subcellular location is the nucleus. Its function is as follows. Transcriptional activator of all of the trichothecene biosynthesis genes. Acts upstream of the cluster-encoded transcription factor TRI6 and is necessary for full expression of both the other trichothecene genes and the genes for the primary metabolic pathway that precedes the trichothecene biosynthetic pathway. The chain is Trichothecene biosynthesis transcription regulator TRI10 from Fusarium sporotrichioides.